Reading from the N-terminus, the 60-residue chain is MTCCNQQSSQPKTTTNCAGNSCYKKTWSDHRGTIIERGCGCPQVKSGIKLECCHTNECNN.

Cystine bridges form between C3/C22, C17/C39, C41/C52, and C53/C58.

It belongs to the three-finger toxin family. Short-chain subfamily. Type I alpha-neurotoxin sub-subfamily. In terms of tissue distribution, expressed by the venom gland.

It is found in the secreted. In terms of biological role, binds to muscle nicotinic acetylcholine receptor (nAChR) and inhibit acetylcholine from binding to the receptor, thereby impairing neuromuscular transmission. The chain is Short neurotoxin 1 from Hydrophis ornatus (Ornate reef seasnake).